A 351-amino-acid polypeptide reads, in one-letter code: Tetraacyldisaccharide 4'-kinase (351 aa).

An ATP-binding site is contributed by threonine 61 to threonine 68.

It belongs to the LpxK family.

It carries out the reaction a lipid A disaccharide + ATP = a lipid IVA + ADP + H(+). It participates in glycolipid biosynthesis; lipid IV(A) biosynthesis; lipid IV(A) from (3R)-3-hydroxytetradecanoyl-[acyl-carrier-protein] and UDP-N-acetyl-alpha-D-glucosamine: step 6/6. Functionally, transfers the gamma-phosphate of ATP to the 4'-position of a tetraacyldisaccharide 1-phosphate intermediate (termed DS-1-P) to form tetraacyldisaccharide 1,4'-bis-phosphate (lipid IVA). The chain is Tetraacyldisaccharide 4'-kinase from Xanthomonas campestris pv. campestris (strain 8004).